We begin with the raw amino-acid sequence, 620 residues long: 1-deoxy-D-xylulose-5-phosphate synthase (620 aa).

Thiamine diphosphate is bound by residues His-80 and 121 to 123 (GHS). Asp-152 contacts Mg(2+). Residues 153–154 (GA), Asn-181, Tyr-288, and Glu-370 each bind thiamine diphosphate. Position 181 (Asn-181) interacts with Mg(2+).

It belongs to the transketolase family. DXPS subfamily. In terms of assembly, homodimer. Mg(2+) serves as cofactor. Thiamine diphosphate is required as a cofactor.

The catalysed reaction is D-glyceraldehyde 3-phosphate + pyruvate + H(+) = 1-deoxy-D-xylulose 5-phosphate + CO2. It functions in the pathway metabolic intermediate biosynthesis; 1-deoxy-D-xylulose 5-phosphate biosynthesis; 1-deoxy-D-xylulose 5-phosphate from D-glyceraldehyde 3-phosphate and pyruvate: step 1/1. Its function is as follows. Catalyzes the acyloin condensation reaction between C atoms 2 and 3 of pyruvate and glyceraldehyde 3-phosphate to yield 1-deoxy-D-xylulose-5-phosphate (DXP). In Photobacterium profundum (strain SS9), this protein is 1-deoxy-D-xylulose-5-phosphate synthase.